A 218-amino-acid polypeptide reads, in one-letter code: Glutathione S-transferase (218 aa).

The 86-residue stretch at 3–88 folds into the GST N-terminal domain; it reads SKPVLGYWDI…YIGRKYKLTG (86 aa). Residues 9-10, 43-46, Lys50, 59-60, and 72-73 each bind glutathione; these read YW, RSAW, NL, and QT. A GST C-terminal domain is found at 90–206; the sequence is NEPEELRVSL…YIKAQQPKLF (117 aa). Tyr116 serves as a coordination point for substrate.

It belongs to the GST superfamily. Mu family.

It catalyses the reaction RX + glutathione = an S-substituted glutathione + a halide anion + H(+). Functionally, conjugation of reduced glutathione to a wide number of exogenous and endogenous hydrophobic electrophiles. The polypeptide is Glutathione S-transferase (Tyrophagus putrescentiae (Mold mite)).